Reading from the N-terminus, the 100-residue chain is Dromyosuppressin (100 aa).

Residues 1 to 24 (MSFAQFFVACCLAIVLLAVSNTRA) form the signal peptide. A propeptide spanning residues 25–84 (AVQGPPLCQSGIVEEMPPHIRKVCQALENSDQLTSALKSYINNEASALVANSDDLLKNYN) is cleaved from the precursor. The residue at position 96 (Phe96) is a Phenylalanine amide.

This sequence belongs to the myosuppressin family.

It is found in the secreted. In terms of biological role, myoinhibiting neuropeptide. In Drosophila melanogaster (Fruit fly), this protein is Dromyosuppressin.